The sequence spans 294 residues: Protein C3orf33 homolog (294 aa).

At alanine 2 the chain carries N-acetylalanine. The helical transmembrane segment at 36-53 (LVQNISTGMAIAGIMLLI) threads the bilayer. A disordered region spans residues 244 to 271 (KPAGADLGSTKDSYHDSRRRASGKGKDS).

The protein localises to the membrane. In terms of biological role, may play a role in transcription regulation. This is Protein C3orf33 homolog from Mus musculus (Mouse).